Consider the following 466-residue polypeptide: MEDVLATAEGVVLVKLVKVAQKLGLKGENGTWKEFLDFYDKQLGSSSLSDPSKRRKDDLVAFLTTLKKKEDLQLLAKSLKLDNDVFEKFKKKSLDETAEQRLVRMTLTHDEYPLDYLFPSNAEDWVRTGLGKKKMEPTKIEMIAIDCEMVLCEDGSEAVVRVAAVDRDLKVILDEFVKPNQPVVDYRTFITGLTAQDLEKATISVVDIQEKLLMFISEDTILVGQSLNHDLKVLKVDHARVIDTSLVFKYNYDGTRRPLRLKRPSLNYLCKCILGYEVQKEGVPHNCVHDAEAAMKLVLAILDNGAETSVPLSKEMLEAEKSKLYLHRIPCNVPYEELNGVVSRDIPHEVKPSKKQDRHYYSAIVVFKSPEEANQAFENIAGDFGKDSRGLSQKQIFLEPSSSEPRLYVLVRKMVEDDLVGEVIAEENNASSKKRKRENHSKGTRDRRRCKPLSRRKQRSNVKRRR.

Residues 142 to 298 enclose the Exonuclease domain; sequence MIAIDCEMVL…HDAEAAMKLV (157 aa). The disordered stretch occupies residues 426–466; the sequence is EENNASSKKRKRENHSKGTRDRRRCKPLSRRKQRSNVKRRR. The segment covering 445–466 has biased composition (basic residues); the sequence is RDRRRCKPLSRRKQRSNVKRRR.

It belongs to the REXO1/REXO3 family.

The protein localises to the nucleus. In terms of biological role, 3'-5' exonuclease degrading single-stranded small RNAs. This is Small RNA degrading nuclease 2 (SDN2) from Arabidopsis thaliana (Mouse-ear cress).